Reading from the N-terminus, the 98-residue chain is Lipolysis-activating peptide 1-alpha chain (98 aa).

The first 22 residues, 1 to 22 (MMKLVLFGIIVILFSMIGSIHG), serve as a signal peptide directing secretion. The region spanning 26 to 89 (PGNYPLNTYG…IWDAVKRHCK (64 aa)) is the LCN-type CS-alpha/beta domain. 3 disulfides stabilise this stretch: C40/C63, C49/C68, and C53/C70. A Lysine amide modification is found at K96.

The protein belongs to the long (3 C-C) scorpion toxin superfamily. Monomer (edited version) and heterodimer (non-edited version) of this alpha chain and a beta chain (AC B8XGZ8). As to expression, expressed by the venom gland.

It localises to the secreted. Its function is as follows. The heterodimer non-edited LVP1 induces lipolysis in rat adipocytes. Induction of lipolysis by LVP1 appears to be mediated through the beta-2 adrenergic receptor pathway (ADRB2). Functionally, the edited BmKBTx-like, similar to beta-toxins, may modulate voltage-gated sodium channels (Nav) and may block voltage-gated potassium channels (Kv). In Buthus israelis (Israeli scorpion), this protein is Lipolysis-activating peptide 1-alpha chain.